Reading from the N-terminus, the 902-residue chain is Ephrin type-B receptor 1-B (902 aa).

One can recognise an Eph LBD domain in the interval 1-119 (HRVYVEMRFT…FFKKCPSVVQ (119 aa)). The Extracellular segment spans residues 1–459 (HRVYVEMRFT…KSELREQLPL (459 aa)). Fibronectin type-III domains are found at residues 240–350 (VPSG…TNQA) and 351–448 (APSS…TEED). Residues Asn-252, Asn-344, and Asn-398 are each glycosylated (N-linked (GlcNAc...) asparagine). The helical transmembrane segment at 460 to 480 (IAGSAAAGVVFIVSLVAISIV) threads the bilayer. The Cytoplasmic segment spans residues 481–902 (CSRKRTYSKE…QISQSPTSIA (422 aa)). In terms of domain architecture, Protein kinase spans 537–800 (VKIEEVIGAG…EIVNTLDKMI (264 aa)). ATP-binding positions include 543–551 (IGAGEFGEV) and Lys-569. Asp-662 acts as the Proton acceptor in catalysis. Residues 829–893 (SAFTSVDDWL…LNSIQSMRVQ (65 aa)) enclose the SAM domain. The PDZ-binding signature appears at 900-902 (SIA).

Belongs to the protein kinase superfamily. Tyr protein kinase family. Ephrin receptor subfamily. Heterotetramer upon binding of the ligand. The heterotetramer is composed of an ephrin dimer and a receptor dimer. Oligomerization is probably required to induce biological responses. In terms of processing, phosphorylated. Autophosphorylation is stimulated by ligands. Expressed in the embryo in the brain and spinal cord and in the first and fourth visceral arches. Most abundant in adult brain, with lower levels in eye, heart, ovary, oviduct, lung and pharynx.

The protein localises to the cell membrane. Its subcellular location is the early endosome membrane. The protein resides in the cell projection. It localises to the dendrite. The catalysed reaction is L-tyrosyl-[protein] + ATP = O-phospho-L-tyrosyl-[protein] + ADP + H(+). Its function is as follows. Receptor tyrosine kinase which binds promiscuously transmembrane ephrin-B family ligands residing on adjacent cells, leading to contact-dependent bidirectional signaling into neighboring cells. The signaling pathway downstream of the receptor is referred to as forward signaling while the signaling pathway downstream of the ephrin ligand is referred to as reverse signaling. May play a role in axon guidance during nervous system development. May also play an important redundant role with other ephrin-B receptors in development and maturation of dendritic spines and synapse formation. More generally, may play a role in targeted cell migration and adhesion. Upon activation by ephrin-B ligands activates the MAPK/ERK and the JNK signaling cascades to regulate cell migration and adhesion respectively. The protein is Ephrin type-B receptor 1-B (ephb1-b) of Xenopus laevis (African clawed frog).